The sequence spans 57 residues: Large ribosomal subunit protein bL32 (57 aa).

It belongs to the bacterial ribosomal protein bL32 family.

The protein is Large ribosomal subunit protein bL32 of Shouchella clausii (strain KSM-K16) (Alkalihalobacillus clausii).